The primary structure comprises 101 residues: Small ribosomal subunit protein uS14 (101 aa).

Belongs to the universal ribosomal protein uS14 family. In terms of assembly, part of the 30S ribosomal subunit. Contacts proteins S3 and S10.

In terms of biological role, binds 16S rRNA, required for the assembly of 30S particles and may also be responsible for determining the conformation of the 16S rRNA at the A site. In Haemophilus ducreyi (strain 35000HP / ATCC 700724), this protein is Small ribosomal subunit protein uS14.